Here is a 304-residue protein sequence, read N- to C-terminus: Xylanase inhibitor protein 1 (304 aa).

Residues 1 to 30 (MAPLAARRPACLLALLSVAAALFLTPTALA) form the signal peptide. In terms of domain architecture, GH18 spans 36-304 (GQVTVFWGRN…NYSSLIKYYA (269 aa)). The cysteines at positions 55 and 96 are disulfide-linked. Residue asparagine 119 is glycosylated (N-linked (GlcNAc...) asparagine). Glutamate 158 serves as the catalytic Proton donor. The interval 178 to 184 (IRGGPGK) is interaction with fungal GH11 xylanase. The cysteines at positions 194 and 225 are disulfide-linked. The interaction with fungal GH10 xylanase stretch occupies residues 262–275 (HPKNVYYGVAPVAQ). Asparagine 295 is a glycosylation site (N-linked (GlcNAc...) asparagine).

This sequence belongs to the glycosyl hydrolase 18 family. Xylanase inhibitor subfamily. As to quaternary structure, binds to fungal GH10 and GH11 xylanases. Also forms a ternary complex with barley alpha-amylase 1 (AMY1) and insoluble starch.

Its subcellular location is the secreted. Its function is as follows. Fungal xylanase inhibitor. Possesses competitive inhibiting activity against fungal endo-1,4-beta-D-xylanases belonging to glycoside hydrolase family 10 (GH10) and family 11 (GH11). Possesses also inhibitory activity towards barley alpha-amylases. Binding to xylanases or amylases is necessary for inhibition activity. May function in plant defense against secreted fungal pathogen xylanases. Is similar to class III chitinases, but does not exhibit chitinase activity. This is Xylanase inhibitor protein 1 from Triticum aestivum (Wheat).